Consider the following 91-residue polypeptide: MTDTDIKSHKIEFPCNDYPIKVIGDTSVGFTAAVMEVLEKHATVDLKTLAERQSSNGKYTTVQLHIVATGEDQLRDINSALRATGFVHMVL.

This sequence belongs to the UPF0250 family.

The polypeptide is UPF0250 protein Psyr_4360 (Pseudomonas syringae pv. syringae (strain B728a)).